The primary structure comprises 378 residues: Alanine racemase (378 aa).

The Proton acceptor; specific for D-alanine role is filled by Lys35. Lys35 carries the post-translational modification N6-(pyridoxal phosphate)lysine. Arg133 is a substrate binding site. The Proton acceptor; specific for L-alanine role is filled by Tyr266. Position 314 (Met314) interacts with substrate.

Belongs to the alanine racemase family. Pyridoxal 5'-phosphate is required as a cofactor.

The catalysed reaction is L-alanine = D-alanine. It participates in amino-acid biosynthesis; D-alanine biosynthesis; D-alanine from L-alanine: step 1/1. Catalyzes the interconversion of L-alanine and D-alanine. May also act on other amino acids. The protein is Alanine racemase (alr) of Beutenbergia cavernae (strain ATCC BAA-8 / DSM 12333 / CCUG 43141 / JCM 11478 / NBRC 16432 / NCIMB 13614 / HKI 0122).